Reading from the N-terminus, the 501-residue chain is Aldehyde dehydrogenase 1A1 (501 aa).

S2 is subject to N-acetylserine. K91 and K128 each carry N6-acetyllysine. Residues I167–N170, K193–E196, G226–P227, and G246–S247 contribute to the NAD(+) site. An N6-acetyllysine modification is found at K252. Catalysis depends on E269, which acts as the Proton acceptor. E269 to G271 contributes to the NAD(+) binding site. C303 functions as the Nucleophile in the catalytic mechanism. Positions L336 to S501 are mediates interaction with PRMT3. T337 bears the Phosphothreonine mark. E349–K353 lines the NAD(+) pocket. N6-acetyllysine is present on residues K353 and K367. E400–F402 contributes to the NAD(+) binding site. Residue K410 is modified to N6-acetyllysine. S413 bears the Phosphoserine mark. Residues K419 and K495 each carry the N6-acetyllysine modification.

The protein belongs to the aldehyde dehydrogenase family. Homotetramer. Interacts with PRMT3; the interaction is direct, inhibits ALDH1A1 aldehyde dehydrogenase activity and is independent of the methyltransferase activity of PRMT3. In terms of processing, the N-terminus is blocked most probably by acetylation. In terms of tissue distribution, expressed in muscle, liver, small intestine, kidney, brain, lung, heart but not detected in erythrocytes (at protein level).

The protein localises to the cytoplasm. It localises to the cytosol. Its subcellular location is the cell projection. It is found in the axon. The enzyme catalyses an aldehyde + NAD(+) + H2O = a carboxylate + NADH + 2 H(+). It catalyses the reaction all-trans-retinal + NAD(+) + H2O = all-trans-retinoate + NADH + 2 H(+). It carries out the reaction 9-cis-retinal + NAD(+) + H2O = 9-cis-retinoate + NADH + 2 H(+). The catalysed reaction is 11-cis-retinal + NAD(+) + H2O = 11-cis-retinoate + NADH + 2 H(+). The enzyme catalyses 13-cis-retinal + NAD(+) + H2O = 13-cis-retinoate + NADH + 2 H(+). It catalyses the reaction 3-deoxyglucosone + NAD(+) + H2O = 2-dehydro-3-deoxy-D-gluconate + NADH + 2 H(+). It carries out the reaction (E)-4-hydroxynon-2-enal + NAD(+) + H2O = (E)-4-hydroxynon-2-enoate + NADH + 2 H(+). The catalysed reaction is malonaldehyde + NAD(+) + H2O = 3-oxopropanoate + NADH + 2 H(+). The enzyme catalyses hexanal + NAD(+) + H2O = hexanoate + NADH + 2 H(+). It catalyses the reaction propanal + NAD(+) + H2O = propanoate + NADH + 2 H(+). It carries out the reaction acetaldehyde + NAD(+) + H2O = acetate + NADH + 2 H(+). The catalysed reaction is benzaldehyde + NAD(+) + H2O = benzoate + NADH + 2 H(+). The enzyme catalyses 4-aminobutanal + NAD(+) + H2O = 4-aminobutanoate + NADH + 2 H(+). Its pathway is cofactor metabolism; retinol metabolism. Its function is as follows. Cytosolic dehydrogenase that catalyzes the irreversible oxidation of a wide range of aldehydes to their corresponding carboxylic acid. Functions downstream of retinol dehydrogenases and catalyzes the oxidation of retinaldehyde into retinoic acid, the second step in the oxidation of retinol/vitamin A into retinoic acid. This pathway is crucial to control the levels of retinol and retinoic acid, two important molecules which excess can be teratogenic and cytotoxic. Also oxidizes aldehydes resulting from lipid peroxidation like (E)-4-hydroxynon-2-enal/HNE, malonaldehyde and hexanal that form protein adducts and are highly cytotoxic. By participating for instance to the clearance of (E)-4-hydroxynon-2-enal/HNE in the lens epithelium prevents the formation of HNE-protein adducts and lens opacification. Also functions downstream of fructosamine-3-kinase in the fructosamine degradation pathway by catalyzing the oxidation of 3-deoxyglucosone, the carbohydrate product of fructosamine 3-phosphate decomposition, which is itself a potent glycating agent that may react with lysine and arginine side-chains of proteins. Also has an aminobutyraldehyde dehydrogenase activity and is probably part of an alternative pathway for the biosynthesis of GABA/4-aminobutanoate in midbrain, thereby playing a role in GABAergic synaptic transmission. The polypeptide is Aldehyde dehydrogenase 1A1 (Bos taurus (Bovine)).